A 118-amino-acid chain; its full sequence is Putative pterin-4-alpha-carbinolamine dehydratase (118 aa).

This sequence belongs to the pterin-4-alpha-carbinolamine dehydratase family.

It carries out the reaction (4aS,6R)-4a-hydroxy-L-erythro-5,6,7,8-tetrahydrobiopterin = (6R)-L-erythro-6,7-dihydrobiopterin + H2O. This chain is Putative pterin-4-alpha-carbinolamine dehydratase, found in Stutzerimonas stutzeri (strain A1501) (Pseudomonas stutzeri).